Reading from the N-terminus, the 527-residue chain is MNNDFNSWDKYCDYLWYDQKINIWLDISKINFSYDQISSLENKFIGVFSSIKELEAGAISNIDEKRQVGHYWLRNPSIAPNTFIKDEIIKDIRDISEFGDKVLKGIIKNNKNQTYTDVLWIGIGGSGLGPLLITEALQENSVGLNFSYIDNIDPFLISEKLDELSDKLPTTLFVVVSKSGGTPEPKIAMNIIKRHVEDKNILWNSNAIAITMKNSQLYKKAKLENWLKIFNLPDWVGGRTSITSSVGLLPLALINQDVSEFIRGASIMDELTRITNIKDNPAALLSSAWFFSGNGIGKRDMVVLPYRDRLQVFSKYLQQLVMESLGKKFNRKGKIVHQGISVFGNKGSTDQHAYVQQLRDGIDNFFCVFIELLDIPDDNKYFGSENPKEFLSGFLQGTRSALSNENRQSITITLDKLNCLTLGALIALFERAVSFYAELVDINAYDQPGVEAGKKAAAEILEYQKKVTELLNNGEEFSIKKITSLIENSTSEPIFFIIRQMCFGNDDYLIKGDWSNPISIIIKKNSK.

The active-site Proton donor is Glu323. Active-site residues include His352 and Lys454.

Belongs to the GPI family.

It localises to the cytoplasm. It catalyses the reaction alpha-D-glucose 6-phosphate = beta-D-fructose 6-phosphate. It participates in carbohydrate biosynthesis; gluconeogenesis. It functions in the pathway carbohydrate degradation; glycolysis; D-glyceraldehyde 3-phosphate and glycerone phosphate from D-glucose: step 2/4. In terms of biological role, catalyzes the reversible isomerization of glucose-6-phosphate to fructose-6-phosphate. This is Glucose-6-phosphate isomerase from Prochlorococcus marinus (strain MIT 9515).